Consider the following 357-residue polypeptide: Decorin (357 aa).

The signal sequence occupies residues 1 to 16; that stretch reads MRLVLLFVLLLPVCLA. Residues 17 to 30 constitute a propeptide that is removed on maturation; the sequence is TRFHQKGLFDFMIE. Ser-46 is a glycosylation site (O-linked (Xyl...) (glycosaminoglycan) serine). Disulfide bonds link Cys-52–Cys-58 and Cys-56–Cys-65. LRR repeat units follow at residues 71 to 91, 92 to 115, 116 to 139, 140 to 160, 161 to 184, 185 to 210, 211 to 231, 232 to 255, 256 to 279, 280 to 302, 303 to 332, and 333 to 357; these read ERVPKDLPPDTTLLDLQNNKI, TEIKEGDFKNLKNLHALILVNNKI, SKISPAAFAPLKKLERLYLSKNNL, KELPENMPKSLQEIRAHENEI, SKLRKAVFNGLNQVIVLELGTNPL, KSSGIENGAFQGMKRLSYIRIADTNI, TSIPKGLPPSLTELHLDGNKI, SKIDAEGLSGLTNLAKLGLSFNSI, SSVENGSLNNVPHLRELHLNNNEL, VRVPSGLGEHKYIQVVYLHNNKI, ASIGINDFCPLGYNTKKATYSGVSLFSNPV, and QYWEIQPSAFRCIHERSAVQIGNYK. A glycan (N-linked (GlcNAc...) asparagine) is linked at Asn-209. An N-linked (GlcNAc...) asparagine glycan is attached at Asn-260. A disulfide bridge connects residues Cys-311 and Cys-344.

It belongs to the small leucine-rich proteoglycan (SLRP) family. SLRP class I subfamily. Binds to type I and type II collagen, to fibronectin and TGF-beta. Forms a ternary complex with MFAP2 and ELN. The attached glycosaminoglycan chain can be either chondroitin sulfate or dermatan sulfate depending upon the tissue of origin.

The protein localises to the secreted. Its subcellular location is the extracellular space. It localises to the extracellular matrix. May affect the rate of fibrils formation. In Gallus gallus (Chicken), this protein is Decorin (DCN).